The primary structure comprises 54 residues: Rubredoxin (54 aa).

Residues 1-54 (MKKYVCVVCGYIYDPAEGDPDNGVNPGTSFEDIPDDWVCPLCGVGKDQFEPSEE) form the Rubredoxin-like domain. Fe cation contacts are provided by C6, C9, C39, and C42.

This sequence belongs to the rubredoxin family. Requires Fe(3+) as cofactor.

Functionally, rubredoxin is a small nonheme, iron protein lacking acid-labile sulfide. Its single Fe, chelated to 4 Cys, functions as an electron acceptor and may also stabilize the conformation of the molecule. Functions as an intermediate component in the electron transfer chain: NADH-&gt;NROR-&gt;Rd-&gt;FprA1/2 in which Rd serves as the proximal electron donor to the FDPs that exhibit H(2)O-forming NADH oxidase activity. Also functions as the proximal electron donor to the Dfx and revRbr proteins that display superoxide reductase (SOR) and NADH peroxidase activity, respectively. Therefore, is a key electron carrier in an efficient multienzyme complex that can scavenge O(2) and reactive oxygen species (ROS), and thus plays an important role in the oxidative stress defense system in C.acetobutylicum, an obligate anaerobic bacterium. This chain is Rubredoxin (rd), found in Clostridium acetobutylicum (strain ATCC 824 / DSM 792 / JCM 1419 / IAM 19013 / LMG 5710 / NBRC 13948 / NRRL B-527 / VKM B-1787 / 2291 / W).